The chain runs to 665 residues: Translation factor guf1, mitochondrial (665 aa).

The N-terminal 40 residues, 1–40 (MRGCLQLARWLSAAPTRPAASHWPGLCAAPRFFSHSAILR), are a transit peptide targeting the mitochondrion. The region spanning 67-247 (ERYRNFCIVA…TVVDKIPAPI (181 aa)) is the tr-type G domain. GTP is bound by residues 76 to 83 (AHVDHGKS), 140 to 144 (DTPGH), and 194 to 197 (NKVD).

It belongs to the TRAFAC class translation factor GTPase superfamily. Classic translation factor GTPase family. LepA subfamily.

The protein localises to the mitochondrion inner membrane. It catalyses the reaction GTP + H2O = GDP + phosphate + H(+). Functionally, promotes mitochondrial protein synthesis. May act as a fidelity factor of the translation reaction, by catalyzing a one-codon backward translocation of tRNAs on improperly translocated ribosomes. Binds to mitochondrial ribosomes in a GTP-dependent manner. The sequence is that of Translation factor guf1, mitochondrial (guf1) from Aspergillus terreus (strain NIH 2624 / FGSC A1156).